A 479-amino-acid chain; its full sequence is Acetylcholine receptor subunit alpha-type acr-15 (479 aa).

The N-terminal stretch at 1–18 is a signal peptide; sequence MLLPILLHFLLLITQLNG. Residues 19–230 are Extracellular-facing; sequence SPAEVRLIND…HLRRRTLYYS (212 aa). N-linked (GlcNAc...) asparagine glycans are attached at residues N60 and N92. C146 and C160 are oxidised to a cystine. The N-linked (GlcNAc...) asparagine glycan is linked to N200. C208 and C209 are oxidised to a cystine. A helical membrane pass occupies residues 231–251; sequence FNLIAPVLLTMILVILGFTVS. Residues 252–257 lie on the Cytoplasmic side of the membrane; it reads PETCEK. Residues 258–278 traverse the membrane as a helical segment; it reads VGLQISVSLAICIFLTIMSEL. Over 279–285 the chain is Extracellular; that stretch reads TPQTSEA. A helical membrane pass occupies residues 286–306; that stretch reads VPLLGVFFHTCNFISVLATSF. The Cytoplasmic portion of the chain corresponds to 307 to 453; it reads TVYVQSFHFR…WRFAAIVVDR (147 aa). The chain crosses the membrane as a helical span at residues 454 to 474; it reads LCLLAFSLLIVVVSIIIALRA. The Extracellular portion of the chain corresponds to 475–479; that stretch reads PYLFA.

This sequence belongs to the ligand-gated ion channel (TC 1.A.9) family. Acetylcholine receptor (TC 1.A.9.1) subfamily. In terms of tissue distribution, expressed in interneurons, motor neurons, pharyngeal neurons and muscles.

The protein resides in the cell membrane. It is found in the postsynaptic cell membrane. Functionally, after binding acetylcholine, the AChR responds by an extensive change in conformation that affects all subunits and leads to opening of an ion-conducting channel across the plasma membrane. Activity is required in glutamatergic neurons to mediate nicotine-induced and nicotine-motivated behaviors. This Caenorhabditis elegans protein is Acetylcholine receptor subunit alpha-type acr-15.